The primary structure comprises 978 residues: Glycine dehydrogenase (decarboxylating) (978 aa).

The residue at position 726 (K726) is an N6-(pyridoxal phosphate)lysine.

The protein belongs to the GcvP family. The glycine cleavage system is composed of four proteins: P, T, L and H. Pyridoxal 5'-phosphate is required as a cofactor.

The catalysed reaction is N(6)-[(R)-lipoyl]-L-lysyl-[glycine-cleavage complex H protein] + glycine + H(+) = N(6)-[(R)-S(8)-aminomethyldihydrolipoyl]-L-lysyl-[glycine-cleavage complex H protein] + CO2. Functionally, the glycine cleavage system catalyzes the degradation of glycine. The P protein binds the alpha-amino group of glycine through its pyridoxal phosphate cofactor; CO(2) is released and the remaining methylamine moiety is then transferred to the lipoamide cofactor of the H protein. This chain is Glycine dehydrogenase (decarboxylating), found in Paraburkholderia xenovorans (strain LB400).